Consider the following 471-residue polypeptide: Putative multidrug resistance protein MdtD (471 aa).

Residues 1–11 are Periplasmic-facing; the sequence is MTDLPDSTRWQ. A helical transmembrane segment spans residues 12–32; sequence LWIVAFGFFMQSLDTTIVNTA. The Cytoplasmic segment spans residues 33-48; the sequence is LPSMAQSLGESPLHMH. A helical membrane pass occupies residues 49-69; it reads MVIVSYVLTVAVMLPASGWLA. At 70 to 76 the chain is on the periplasmic side; it reads DKVGVRN. The helical transmembrane segment at 77 to 97 threads the bilayer; that stretch reads IFFTAIVLFTLGSLFCALSAT. Residues 98–101 lie on the Cytoplasmic side of the membrane; sequence LNEL. A helical membrane pass occupies residues 102–124; it reads LLARALQGVGGAMMVPVGRLTVM. The Periplasmic portion of the chain corresponds to 125 to 137; the sequence is KIVPREQYMAAMT. A helical membrane pass occupies residues 138–158; the sequence is FVTLPGQVGPLLGPALGGLLV. The Cytoplasmic portion of the chain corresponds to 159 to 164; the sequence is EYASWH. Residues 165-185 traverse the membrane as a helical segment; that stretch reads WIFLINIPVGIIGAIATLMLM. Over 186–196 the chain is Periplasmic; sequence PNYTMQTRRFD. The helical transmembrane segment at 197–217 threads the bilayer; that stretch reads LSGFLLLAVGMAVLTLALDGS. Residues 218 to 224 are Cytoplasmic-facing; the sequence is KGTGLSP. Residues 225-245 traverse the membrane as a helical segment; that stretch reads LAIAGLAAIGVVALVLYLLHA. Residues 246 to 262 lie on the Periplasmic side of the membrane; sequence RNNNRALFSLKLFRTRT. A helical membrane pass occupies residues 263–283; the sequence is FSLGLAGSFAGRIGSGMLPFM. Residues 284–285 are Cytoplasmic-facing; that stretch reads TP. A helical membrane pass occupies residues 286–306; the sequence is VFLQIGLGFSPFHAGLMMIPM. Residues 307–341 lie on the Periplasmic side of the membrane; the sequence is VLGSMGMKRIVVQVVNRFGYRRVLVATTLGLSLVT. The helical transmembrane segment at 342–362 threads the bilayer; it reads LLFMTTALLGWYYVLPFVLFL. The Cytoplasmic segment spans residues 363 to 395; sequence QGMVNSTRFSSMNTLTLKDLPDNLASSGNSLLS. The helical transmembrane segment at 396–416 threads the bilayer; that stretch reads MIMQLSMSIGVTIAGLLLGLF. At 417–430 the chain is on the periplasmic side; the sequence is GSQHVSVDSSTTQT. The helical transmembrane segment at 431-451 threads the bilayer; that stretch reads VFMYTWLSMALIIALPAFIFA. At 452-471 the chain is on the cytoplasmic side; sequence RVPNDTHQNVAISRRKRSAQ.

It belongs to the major facilitator superfamily. TCR/Tet family.

It localises to the cell inner membrane. The chain is Putative multidrug resistance protein MdtD from Escherichia fergusonii (strain ATCC 35469 / DSM 13698 / CCUG 18766 / IAM 14443 / JCM 21226 / LMG 7866 / NBRC 102419 / NCTC 12128 / CDC 0568-73).